The primary structure comprises 393 residues: Formate-dependent phosphoribosylglycinamide formyltransferase (393 aa).

Residues 22-23 and Glu82 each bind N(1)-(5-phospho-beta-D-ribosyl)glycinamide; that span reads EL. ATP contacts are provided by residues Arg114, Lys155, 160–165, 195–198, and Glu203; these read SSGHGQ and EGFV. One can recognise an ATP-grasp domain in the interval 119-308; the sequence is RLAAEKLKLP…EFALHARAIL (190 aa). Glu267 and Glu279 together coordinate Mg(2+). N(1)-(5-phospho-beta-D-ribosyl)glycinamide is bound by residues Asp286, Lys356, and 363–364; that span reads RR.

The protein belongs to the PurK/PurT family. Homodimer.

It catalyses the reaction N(1)-(5-phospho-beta-D-ribosyl)glycinamide + formate + ATP = N(2)-formyl-N(1)-(5-phospho-beta-D-ribosyl)glycinamide + ADP + phosphate + H(+). Its pathway is purine metabolism; IMP biosynthesis via de novo pathway; N(2)-formyl-N(1)-(5-phospho-D-ribosyl)glycinamide from N(1)-(5-phospho-D-ribosyl)glycinamide (formate route): step 1/1. Its function is as follows. Involved in the de novo purine biosynthesis. Catalyzes the transfer of formate to 5-phospho-ribosyl-glycinamide (GAR), producing 5-phospho-ribosyl-N-formylglycinamide (FGAR). Formate is provided by PurU via hydrolysis of 10-formyl-tetrahydrofolate. This Histophilus somni (strain 129Pt) (Haemophilus somnus) protein is Formate-dependent phosphoribosylglycinamide formyltransferase.